A 351-amino-acid chain; its full sequence is Fe-S cluster assembly protein DRE2 (351 aa).

The interval 1 to 151 is N-terminal SAM-like domain; sequence MATTGRVLLL…KPDIGAQQAI (151 aa). Residues 93–118 are disordered; sequence RNRENKPWGLSDGNGNNANSSRRYND. Polar residues predominate over residues 105-114; sequence GNGNNANSSR. The interval 152 to 243 is linker; sequence PLKLGRRRKE…EDELLDEDDM (92 aa). [2Fe-2S] cluster-binding residues include Cys253, Cys264, Cys267, and Cys269. Residues 253-269 form a fe-S binding site A region; sequence CRPKPGKRRRACKDCSC. [4Fe-4S] cluster-binding residues include Cys314, Cys317, Cys325, and Cys328. Short sequence motifs (cx2C motif) lie at residues 314–317 and 325–328; these read CGNC and CDGC. Residues 314–328 are fe-S binding site B; sequence CGNCSLGDAFRCDGC.

The protein belongs to the anamorsin family. Monomer. Interacts with TAH18. Interacts with MIA40. It depends on [2Fe-2S] cluster as a cofactor. The cofactor is [4Fe-4S] cluster.

It localises to the cytoplasm. The protein localises to the mitochondrion intermembrane space. In terms of biological role, component of the cytosolic iron-sulfur (Fe-S) protein assembly (CIA) machinery required for the maturation of extramitochondrial Fe-S proteins. Part of an electron transfer chain functioning in an early step of cytosolic Fe-S biogenesis, facilitating the de novo assembly of a [4Fe-4S] cluster on the scaffold complex CFD1-NBP35. Electrons are transferred to DRE2 from NADPH via the FAD- and FMN-containing protein TAH18. TAH18-DRE2 are also required for the assembly of the diferric tyrosyl radical cofactor of ribonucleotide reductase (RNR), probably by providing electrons for reduction during radical cofactor maturation in the catalytic small subunit RNR2. This Ajellomyces capsulatus (strain H143) (Darling's disease fungus) protein is Fe-S cluster assembly protein DRE2.